The chain runs to 497 residues: Zinc metalloproteinase nas-28 (497 aa).

Positions 1-14 (MFFPVVFFIPFVLG) are cleaved as a signal peptide. A propeptide spanning residues 15-120 (APTQKALEKI…IENGNYRSKR (106 aa)) is cleaved from the precursor. N76 carries an N-linked (GlcNAc...) asparagine glycan. The Peptidase M12A domain occupies 121–319 (QAIVDTTNFW…IGVNKLYNCT (199 aa)). 7 disulfide bridges follow: C164/C318, C185/C206, C328/C339, C331/C342, C344/C353, C364/C398, and C427/C447. H214 lines the Zn(2+) pocket. The active site involves E215. Residues H218 and H224 each coordinate Zn(2+). N-linked (GlcNAc...) asparagine glycosylation occurs at N317. In terms of domain architecture, EGF-like spans 324–354 (IQMKCSNCGITDSRNCNQCKCPRYFTGASCD). The 120-residue stretch at 364–483 (CNGAVLQATS…LTFSIQYRAV (120 aa)) folds into the CUB domain. An N-linked (GlcNAc...) asparagine glycan is attached at N394.

Zn(2+) is required as a cofactor.

The protein localises to the secreted. Functionally, metalloprotease. The sequence is that of Zinc metalloproteinase nas-28 (nas-28) from Caenorhabditis elegans.